The chain runs to 306 residues: Porphobilinogen deaminase (306 aa).

Cys241 is modified (S-(dipyrrolylmethanemethyl)cysteine).

It belongs to the HMBS family. In terms of assembly, monomer. The cofactor is dipyrromethane.

The catalysed reaction is 4 porphobilinogen + H2O = hydroxymethylbilane + 4 NH4(+). It participates in porphyrin-containing compound metabolism; protoporphyrin-IX biosynthesis; coproporphyrinogen-III from 5-aminolevulinate: step 2/4. Its function is as follows. Tetrapolymerization of the monopyrrole PBG into the hydroxymethylbilane pre-uroporphyrinogen in several discrete steps. The chain is Porphobilinogen deaminase from Acidithiobacillus ferrooxidans (strain ATCC 23270 / DSM 14882 / CIP 104768 / NCIMB 8455) (Ferrobacillus ferrooxidans (strain ATCC 23270)).